The following is a 460-amino-acid chain: UDP-glycosyltransferase 91C1 (460 aa).

Residues Thr-283, 335-337, 352-360, and 374-377 each bind UDP-alpha-D-glucose; these read VPQ, HCGWNSVVE, and LNEQ.

This sequence belongs to the UDP-glycosyltransferase family.

The protein is UDP-glycosyltransferase 91C1 (UGT91C1) of Arabidopsis thaliana (Mouse-ear cress).